Consider the following 63-residue polypeptide: Large ribosomal subunit protein uL29 (63 aa).

This sequence belongs to the universal ribosomal protein uL29 family.

This chain is Large ribosomal subunit protein uL29, found in Pectobacterium atrosepticum (strain SCRI 1043 / ATCC BAA-672) (Erwinia carotovora subsp. atroseptica).